The sequence spans 782 residues: E3 ubiquitin-protein ligase SopA (782 aa).

Residues 136–171 (GVSVSANNRPTVSEGRTPPVSPSLSLQATSSPSSPA) are disordered. The segment covering 157–171 (PSLSLQATSSPSSPA) has biased composition (low complexity). The active-site Glycyl thioester intermediate is the Cys-753.

This sequence belongs to the SopA E3 ligase family. Post-translationally, ubiquitinated in the presence of host E1 ubiquitin-activating enzyme, E2 ubiquitin-conjugating enzyme and ubiquitin.

It is found in the secreted. Its subcellular location is the host cell. It carries out the reaction S-ubiquitinyl-[E2 ubiquitin-conjugating enzyme]-L-cysteine + [acceptor protein]-L-lysine = [E2 ubiquitin-conjugating enzyme]-L-cysteine + N(6)-ubiquitinyl-[acceptor protein]-L-lysine.. In terms of biological role, effector proteins function to alter host cell physiology and promote bacterial survival in host tissues. This protein is an E3 ubiquitin ligase that interferes with host's ubiquitination pathway. For instance, prevents host innate immune response by ubiquitinating and thus sending to degradation host E3 ubiquitin ligases TRIM56 and TRIM65. The sequence is that of E3 ubiquitin-protein ligase SopA (sopA) from Salmonella typhimurium (strain D23580).